Here is a 112-residue protein sequence, read N- to C-terminus: Putative pterin-4-alpha-carbinolamine dehydratase (112 aa).

The protein belongs to the pterin-4-alpha-carbinolamine dehydratase family.

It catalyses the reaction (4aS,6R)-4a-hydroxy-L-erythro-5,6,7,8-tetrahydrobiopterin = (6R)-L-erythro-6,7-dihydrobiopterin + H2O. The protein is Putative pterin-4-alpha-carbinolamine dehydratase of Dechloromonas aromatica (strain RCB).